The chain runs to 133 residues: Phosphoribosyl-ATP pyrophosphatase (133 aa).

Residues 1-22 (MGKPATKPAPKPSKQQDDKKSD) are disordered.

It belongs to the PRA-PH family.

Its subcellular location is the cytoplasm. It catalyses the reaction 1-(5-phospho-beta-D-ribosyl)-ATP + H2O = 1-(5-phospho-beta-D-ribosyl)-5'-AMP + diphosphate + H(+). It functions in the pathway amino-acid biosynthesis; L-histidine biosynthesis; L-histidine from 5-phospho-alpha-D-ribose 1-diphosphate: step 2/9. The protein is Phosphoribosyl-ATP pyrophosphatase of Gluconobacter oxydans (strain 621H) (Gluconobacter suboxydans).